Consider the following 297-residue polypeptide: MDPGKDKEGVPQPSGPPARKKFVIPLDEDEVPPGVAKPLFRSTQSLPTVDTSAQAAPQTYAEYAISQPLEGAGATCPTGSEPLAGETPNQALKPGAKSNSIIVSPRQRGNPVLKFVRNVPWEFGDVIPDYVLGQSTCALFLSLRYHNLHPDYIHGRLQSLGKNFALRVLLVQVDVKDPQQALKELAKMCILADCTLILAWSPEEAGRYLETYKAYEQKPADLLMEKLEQDFVSRVTECLTTVKSVNKTDSQTLLTTFGSLEQLIAASREDLALCPGLGPQKARRLFDVLHEPFLKVP.

At methionine 1 the chain carries N-acetylmethionine. The segment at 1-39 (MDPGKDKEGVPQPSGPPARKKFVIPLDEDEVPPGVAKPL) is disordered. Positions 17–23 (PARKKFV) match the Nuclear localization signal motif. Glycyl lysine isopeptide (Lys-Gly) (interchain with G-Cter in SUMO2) cross-links involve residues lysine 21 and lysine 37. Residues 134–156 (QSTCALFLSLRYHNLHPDYIHGR) mediate DNA binding. A hhH2, dimerization with ERCC4/XPF region spans residues 220–297 (ADLLMEKLEQ…VLHEPFLKVP (78 aa)). Residue lysine 243 forms a Glycyl lysine isopeptide (Lys-Gly) (interchain with G-Cter in SUMO2) linkage.

This sequence belongs to the ERCC1/RAD10/SWI10 family. In terms of assembly, heterodimer composed of ERCC1 isoform 1 and ERCC4/XPF. Interacts with USP45. Does not interact with ERCC4/XPF. Ubiquitinated with both 'Lys-48' and 'Lys-63' linkages. Deubiquitinated by USP45.

Its subcellular location is the nucleus. It localises to the cytoplasm. Functionally, non-catalytic component of a structure-specific DNA repair endonuclease responsible for the 5'-incision during DNA repair. Responsible, in conjunction with SLX4, for the first step in the repair of interstrand cross-links (ICL). Participates in the processing of anaphase bridge-generating DNA structures, which consist in incompletely processed DNA lesions arising during S or G2 phase, and can result in cytokinesis failure. Also required for homology-directed repair (HDR) of DNA double-strand breaks, in conjunction with SLX4. In terms of biological role, not functional in the nucleotide excision repair pathway. The polypeptide is DNA excision repair protein ERCC-1 (ERCC1) (Homo sapiens (Human)).